We begin with the raw amino-acid sequence, 508 residues long: Small ribosomal subunit protein uS3m (508 aa).

This sequence belongs to the universal ribosomal protein uS3 family. As to quaternary structure, component of the mitochondrial small ribosomal subunit (mt-SSU). Mature N.crassa 74S mitochondrial ribosomes consist of a small (37S) and a large (54S) subunit. The 37S small subunit contains a 16S ribosomal RNA (16S mt-rRNA) and 32 different proteins. The 54S large subunit contains a 23S rRNA (23S mt-rRNA) and 42 different proteins. uS3m, uS4m and uS5m form the narrow entry site of the mRNA channel.

Its subcellular location is the mitochondrion. In terms of biological role, component of the mitochondrial ribosome (mitoribosome), a dedicated translation machinery responsible for the synthesis of mitochondrial genome-encoded proteins, including at least some of the essential transmembrane subunits of the mitochondrial respiratory chain. The mitoribosomes are attached to the mitochondrial inner membrane and translation products are cotranslationally integrated into the membrane. uS3m is essential for mitochondrial protein synthesis and required for the maturation of small ribosomal subunits. This chain is Small ribosomal subunit protein uS3m (var1), found in Neurospora crassa (strain ATCC 24698 / 74-OR23-1A / CBS 708.71 / DSM 1257 / FGSC 987).